The primary structure comprises 235 residues: 7-cyano-7-deazaguanine synthase (235 aa).

8–18 is an ATP binding site; that stretch reads FSGGQDSTTCL. Positions 187, 196, 199, and 202 each coordinate Zn(2+).

The protein belongs to the QueC family. The cofactor is Zn(2+).

The catalysed reaction is 7-carboxy-7-deazaguanine + NH4(+) + ATP = 7-cyano-7-deazaguanine + ADP + phosphate + H2O + H(+). The protein operates within purine metabolism; 7-cyano-7-deazaguanine biosynthesis. Functionally, catalyzes the ATP-dependent conversion of 7-carboxy-7-deazaguanine (CDG) to 7-cyano-7-deazaguanine (preQ(0)). The chain is 7-cyano-7-deazaguanine synthase from Aeromonas hydrophila subsp. hydrophila (strain ATCC 7966 / DSM 30187 / BCRC 13018 / CCUG 14551 / JCM 1027 / KCTC 2358 / NCIMB 9240 / NCTC 8049).